Here is a 314-residue protein sequence, read N- to C-terminus: UPF0761 membrane protein VP0125 (314 aa).

The next 6 membrane-spanning stretches (helical) occupy residues 41-61 (YLAY…LSIL), 104-124 (MSAV…SNID), 139-159 (LVFS…LVGA), 185-205 (FLRW…YILV), 217-237 (VGAA…ALYI), and 249-269 (ALAA…IVLL). The disordered stretch occupies residues 295–314 (ESQLANEGSESSDSANSTSQ).

The protein belongs to the UPF0761 family.

Its subcellular location is the cell inner membrane. This is UPF0761 membrane protein VP0125 from Vibrio parahaemolyticus serotype O3:K6 (strain RIMD 2210633).